The following is a 402-amino-acid chain: MKISLFGYGKTTRAIAENLVDKFGSFDIYDDHFVETKKDTLGNLLLNPNDFDNNLSDIEIPSPGFPPKHKLIQKAKNLQSEYDFFYDIMPKSVWISGTNGKTTTTQMATHLLSHIGAVMGGNVGTPLAELNPYEKLWILETSSFTLHYTHKAKPEIYALLPISPDHLSWHGSFDNYVQDKLSVLKRMNECDVTILPKIYANTPTKAHIISYKDEKDLAAKFSIDMEKISFKSPFLLDAIMALAIEKILLDTLSYELLNSFVMEKNKLEEIKDSQNRLWVNDTKATNESAVMAALNRYKDKKIHLIIGGDDKGVDLSNLFDFMKGFDIELYAIGISTEKMLDYAKKANLKAYKCEVLSKAVNEISNHLRVNEVALLSPACASLDQFNSYAERGKVFKECVNKI.

97–103 (GTNGKTT) serves as a coordination point for ATP.

It belongs to the MurCDEF family.

It localises to the cytoplasm. It carries out the reaction UDP-N-acetyl-alpha-D-muramoyl-L-alanine + D-glutamate + ATP = UDP-N-acetyl-alpha-D-muramoyl-L-alanyl-D-glutamate + ADP + phosphate + H(+). The protein operates within cell wall biogenesis; peptidoglycan biosynthesis. Its function is as follows. Cell wall formation. Catalyzes the addition of glutamate to the nucleotide precursor UDP-N-acetylmuramoyl-L-alanine (UMA). In Campylobacter jejuni (strain RM1221), this protein is UDP-N-acetylmuramoylalanine--D-glutamate ligase.